A 507-amino-acid chain; its full sequence is Histidine ammonia-lyase (507 aa).

Positions 141–143 (ASG) form a cross-link, 5-imidazolinone (Ala-Gly). Ser142 carries the 2,3-didehydroalanine (Ser) modification.

The protein belongs to the PAL/histidase family. Post-translationally, contains an active site 4-methylidene-imidazol-5-one (MIO), which is formed autocatalytically by cyclization and dehydration of residues Ala-Ser-Gly.

The protein resides in the cytoplasm. The catalysed reaction is L-histidine = trans-urocanate + NH4(+). It functions in the pathway amino-acid degradation; L-histidine degradation into L-glutamate; N-formimidoyl-L-glutamate from L-histidine: step 1/3. The sequence is that of Histidine ammonia-lyase from Cereibacter sphaeroides (strain ATCC 17023 / DSM 158 / JCM 6121 / CCUG 31486 / LMG 2827 / NBRC 12203 / NCIMB 8253 / ATH 2.4.1.) (Rhodobacter sphaeroides).